We begin with the raw amino-acid sequence, 693 residues long: Elongation factor G (693 aa).

One can recognise a tr-type G domain in the interval 8-282; it reads EKTRNIGIMA…AVIDYLPSPL (275 aa). Residues 17–24, 81–85, and 135–138 contribute to the GTP site; these read AHIDAGKT, DTPGH, and NKMD.

This sequence belongs to the TRAFAC class translation factor GTPase superfamily. Classic translation factor GTPase family. EF-G/EF-2 subfamily.

The protein localises to the cytoplasm. Catalyzes the GTP-dependent ribosomal translocation step during translation elongation. During this step, the ribosome changes from the pre-translocational (PRE) to the post-translocational (POST) state as the newly formed A-site-bound peptidyl-tRNA and P-site-bound deacylated tRNA move to the P and E sites, respectively. Catalyzes the coordinated movement of the two tRNA molecules, the mRNA and conformational changes in the ribosome. In Staphylococcus aureus (strain Mu3 / ATCC 700698), this protein is Elongation factor G.